Consider the following 222-residue polypeptide: MSFTRRKFVLGMGTVIFFTGSASSLLANTRQEKEVRYAMIHDESRCNGCNICARACRKTNHAPAQGSRLSIAHIPVTDNDNETQYHFFRQSCQHCEDAPCIDVCPTGASWRDEQGIVRVEKSQCIGCSYCIGACPYQVRYLNPVTKVADKCDFCAESRLAKGFPPICVSACPEHALIFGREDSPEIQAWLQDNKYYQYQLPGAGKPHLYRRFGQHLIKKENV.

The tat-type signal signal peptide spans 1 to 27; sequence MSFTRRKFVLGMGTVIFFTGSASSLLA. 4Fe-4S ferredoxin-type domains are found at residues 37–66, 83–114, and 115–144; these read YAMI…PAQG, TQYH…RDEQ, and GIVR…LNPV. [4Fe-4S] cluster contacts are provided by Cys46, Cys49, Cys52, Cys56, Cys92, Cys95, Cys100, Cys104, Cys124, Cys127, Cys130, Cys134, Cys151, Cys154, Cys167, and Cys171.

In terms of processing, predicted to be exported by the Tat system. The position of the signal peptide cleavage has not been experimentally proven.

This is an uncharacterized protein from Escherichia coli O157:H7.